A 424-amino-acid chain; its full sequence is Delta(14)-sterol reductase erg24 (424 aa).

2 helical membrane-spanning segments follow: residues 19–39 (IGAL…FYIC) and 112–132 (LILG…MEFI). NADP(+) contacts are provided by residues K317, R321, L344, W349, and 356–357 (NY). The chain crosses the membrane as a helical span at residues 370 to 390 (PAGFGSPIPYFYVAYFGVLLV). NADP(+) is bound by residues D396, 400-404 (CRVKY), and Y411.

It belongs to the ERG4/ERG24 family.

The protein resides in the endoplasmic reticulum membrane. The catalysed reaction is 4,4-dimethyl-5alpha-cholesta-8,24-dien-3beta-ol + NADP(+) = 4,4-dimethyl-5alpha-cholesta-8,14,24-trien-3beta-ol + NADPH + H(+). The protein operates within steroid biosynthesis; zymosterol biosynthesis; zymosterol from lanosterol: step 2/6. Its pathway is steroid metabolism; ergosterol biosynthesis. Its function is as follows. Delta(14)-sterol reductase; part of the third module of ergosterol biosynthesis pathway that includes by the late steps of the pathway. Erg24 reduces the C14=C15 double bond of 4,4-dimethyl-cholesta-8,14,24-trienol to produce 4,4-dimethyl-cholesta-8,24-dienol. The third module or late pathway involves the ergosterol synthesis itself through consecutive reactions that mainly occur in the endoplasmic reticulum (ER) membrane. Firstly, the squalene synthase erg9 catalyzes the condensation of 2 farnesyl pyrophosphate moieties to form squalene, which is the precursor of all steroids. Secondly, squalene is converted into lanosterol by the consecutive action of the squalene epoxidase erg1 and the lanosterol synthase erg7. The lanosterol 14-alpha-demethylase erg11/cyp1 catalyzes C14-demethylation of lanosterol to produce 4,4'-dimethyl cholesta-8,14,24-triene-3-beta-ol. In the next steps, a complex process involving various demethylation, reduction and desaturation reactions catalyzed by the C-14 reductase erg24 and the C-4 demethylation complex erg25-erg26-erg27 leads to the production of zymosterol. Erg28 likely functions in the C-4 demethylation complex reaction by tethering erg26 and Erg27 to the endoplasmic reticulum or to facilitate interaction between these proteins. Then, the sterol 24-C-methyltransferase erg6 catalyzes the methyl transfer from S-adenosyl-methionine to the C-24 of zymosterol to form fecosterol. The C-8 sterol isomerase erg2 catalyzes the reaction which results in unsaturation at C-7 in the B ring of sterols and thus converts fecosterol to episterol. The sterol-C5-desaturases erg31 and erg32 then catalyze the introduction of a C-5 double bond in the B ring to produce 5-dehydroepisterol. The C-22 sterol desaturase erg5 further converts 5-dehydroepisterol into ergosta-5,7,22,24(28)-tetraen-3beta-ol by forming the C-22(23) double bond in the sterol side chain. Finally, ergosta-5,7,22,24(28)-tetraen-3beta-ol is substrate of the C-24(28) sterol reductase erg4 to produce ergosterol. In the genus Schizosaccharomyces, a second route exists between lanosterol and fecosterol, via the methylation of lanosterol to eburicol by erg6, followed by C14-demethylation by erg11/cyp1 and C4-demethylation by the demethylation complex erg25-erg26-erg27. This chain is Delta(14)-sterol reductase erg24, found in Schizosaccharomyces pombe (strain 972 / ATCC 24843) (Fission yeast).